A 55-amino-acid polypeptide reads, in one-letter code: DIYNYMEPYVSKVDPTDYFGNEQARTAWVDSGAQLGELSYGVLFNIQYVNYWFAP.

The protein is Major pollen allergen Dac g 4 of Dactylis glomerata (Orchard grass).